The chain runs to 342 residues: Dual-specificity RNA methyltransferase RlmN (342 aa).

Glu-92 (proton acceptor) is an active-site residue. The region spanning 98-329 (DLPRSTLCVS…THVRRSRGGE (232 aa)) is the Radical SAM core domain. Cysteines 105 and 334 form a disulfide. 3 residues coordinate [4Fe-4S] cluster: Cys-112, Cys-116, and Cys-119. S-adenosyl-L-methionine contacts are provided by residues 161-162 (GE), Ser-193, 215-217 (SLH), and Asn-291. Residue Cys-334 is the S-methylcysteine intermediate of the active site.

The protein belongs to the radical SAM superfamily. RlmN family. The cofactor is [4Fe-4S] cluster.

It is found in the cytoplasm. The enzyme catalyses adenosine(2503) in 23S rRNA + 2 reduced [2Fe-2S]-[ferredoxin] + 2 S-adenosyl-L-methionine = 2-methyladenosine(2503) in 23S rRNA + 5'-deoxyadenosine + L-methionine + 2 oxidized [2Fe-2S]-[ferredoxin] + S-adenosyl-L-homocysteine. It catalyses the reaction adenosine(37) in tRNA + 2 reduced [2Fe-2S]-[ferredoxin] + 2 S-adenosyl-L-methionine = 2-methyladenosine(37) in tRNA + 5'-deoxyadenosine + L-methionine + 2 oxidized [2Fe-2S]-[ferredoxin] + S-adenosyl-L-homocysteine. Its function is as follows. Specifically methylates position 2 of adenine 2503 in 23S rRNA and position 2 of adenine 37 in tRNAs. m2A2503 modification seems to play a crucial role in the proofreading step occurring at the peptidyl transferase center and thus would serve to optimize ribosomal fidelity. This Syntrophobacter fumaroxidans (strain DSM 10017 / MPOB) protein is Dual-specificity RNA methyltransferase RlmN.